Here is a 700-residue protein sequence, read N- to C-terminus: Protein claret segregational (700 aa).

2 positions are modified to phosphoserine: serine 94 and serine 96. Residues 141-185 form a disordered region; sequence APSSITATAVKRPPVTRPAPRAAGGAAAKKPAGTGAAASSGAAAA. Positions 149 to 185 are enriched in low complexity; the sequence is AVKRPPVTRPAPRAAGGAAAKKPAGTGAAASSGAAAA. Residues 196-346 adopt a coiled-coil conformation; sequence KARFHDLLEK…ELHNTVMDLR (151 aa). In terms of domain architecture, Kinesin motor spans 348–670; it reads NIRVFCRIRP…LRFAASVNSC (323 aa). ATP is bound at residue 434–441; sequence GQTGSGKT. A required for minus-end directionality region spans residues 664-668; that stretch reads AASVN. The disordered stretch occupies residues 681-700; the sequence is LNNSVANSSTQSNNSGSFDK.

Belongs to the TRAFAC class myosin-kinesin ATPase superfamily. Kinesin family. NCD subfamily.

The protein localises to the cytoplasm. It localises to the cytoskeleton. The enzyme catalyses ATP + H2O = ADP + phosphate + H(+). In terms of biological role, minus-end-directed microtubule-based motor protein. Has ATPase activity. Required for normal chromosomal segregation in meiosis in females, and in early mitotic divisions of the embryo. This is Protein claret segregational (ncd) from Drosophila melanogaster (Fruit fly).